Consider the following 213-residue polypeptide: Pyridoxine/pyridoxamine 5'-phosphate oxidase (213 aa).

Substrate is bound by residues 8 to 11 (RKNY) and K66. Residues 61-66 (RIVLIK), 76-77 (FT), R82, K83, and Q105 contribute to the FMN site. Y123, R127, and S131 together coordinate substrate. Residues 140 to 141 (QS) and W184 contribute to the FMN site. 190–192 (RLH) contributes to the substrate binding site. R194 is a binding site for FMN.

Belongs to the pyridoxamine 5'-phosphate oxidase family. In terms of assembly, homodimer. FMN is required as a cofactor.

The catalysed reaction is pyridoxamine 5'-phosphate + O2 + H2O = pyridoxal 5'-phosphate + H2O2 + NH4(+). The enzyme catalyses pyridoxine 5'-phosphate + O2 = pyridoxal 5'-phosphate + H2O2. Its pathway is cofactor metabolism; pyridoxal 5'-phosphate salvage; pyridoxal 5'-phosphate from pyridoxamine 5'-phosphate: step 1/1. The protein operates within cofactor metabolism; pyridoxal 5'-phosphate salvage; pyridoxal 5'-phosphate from pyridoxine 5'-phosphate: step 1/1. Its function is as follows. Catalyzes the oxidation of either pyridoxine 5'-phosphate (PNP) or pyridoxamine 5'-phosphate (PMP) into pyridoxal 5'-phosphate (PLP). This chain is Pyridoxine/pyridoxamine 5'-phosphate oxidase, found in Paraburkholderia xenovorans (strain LB400).